Consider the following 317-residue polypeptide: tRNA dimethylallyltransferase (317 aa).

Gly19 to Ser26 contributes to the ATP binding site. Thr21–Ser26 contributes to the substrate binding site. Positions Asp49–Gln52 are interaction with substrate tRNA.

The protein belongs to the IPP transferase family. In terms of assembly, monomer. Mg(2+) is required as a cofactor.

The catalysed reaction is adenosine(37) in tRNA + dimethylallyl diphosphate = N(6)-dimethylallyladenosine(37) in tRNA + diphosphate. In terms of biological role, catalyzes the transfer of a dimethylallyl group onto the adenine at position 37 in tRNAs that read codons beginning with uridine, leading to the formation of N6-(dimethylallyl)adenosine (i(6)A). The chain is tRNA dimethylallyltransferase from Erythrobacter litoralis (strain HTCC2594).